The following is a 341-amino-acid chain: uncharacterized protein (341 aa).

3 helical membrane-spanning segments follow: residues 6–26, 63–83, and 137–157; these read IIAGLLLLTAGMIDFLWTTLW, LLLCLTLVIWISLFWSGWVLI, and AQGLLTITFSVTYLISVLSAV.

It localises to the cell membrane. This is an uncharacterized protein from Bacillus subtilis (strain 168).